We begin with the raw amino-acid sequence, 271 residues long: Mannosyl-3-phosphoglycerate phosphatase (271 aa).

D13 (nucleophile) is an active-site residue. Residues D13, D15, and D214 each coordinate Mg(2+).

The protein belongs to the HAD-like hydrolase superfamily. MPGP family. It depends on Mg(2+) as a cofactor.

The protein resides in the cytoplasm. It catalyses the reaction 2-O-(alpha-D-mannosyl)-3-phosphoglycerate + H2O = (2R)-2-O-(alpha-D-mannosyl)-glycerate + phosphate. This chain is Mannosyl-3-phosphoglycerate phosphatase (yedP), found in Shigella boydii serotype 4 (strain Sb227).